Here is a 304-residue protein sequence, read N- to C-terminus: Bifunctional protein FolD (304 aa).

Residues 167–169, Ser192, and Ile233 contribute to the NADP(+) site; that span reads GRS.

This sequence belongs to the tetrahydrofolate dehydrogenase/cyclohydrolase family. Homodimer.

It carries out the reaction (6R)-5,10-methylene-5,6,7,8-tetrahydrofolate + NADP(+) = (6R)-5,10-methenyltetrahydrofolate + NADPH. The enzyme catalyses (6R)-5,10-methenyltetrahydrofolate + H2O = (6R)-10-formyltetrahydrofolate + H(+). Its pathway is one-carbon metabolism; tetrahydrofolate interconversion. In terms of biological role, catalyzes the oxidation of 5,10-methylenetetrahydrofolate to 5,10-methenyltetrahydrofolate and then the hydrolysis of 5,10-methenyltetrahydrofolate to 10-formyltetrahydrofolate. This Rhodospirillum centenum (strain ATCC 51521 / SW) protein is Bifunctional protein FolD.